We begin with the raw amino-acid sequence, 962 residues long: Phenylalanine--tRNA ligase beta subunit (962 aa).

Residues 85-201 (TIRWCKVRVC…AEVFQGDELS (117 aa)) form the tRNA-binding domain. In terms of domain architecture, B5 spans 456–538 (TQQSPILLST…RVIGFNRIPS (83 aa)). 4 residues coordinate Mg(2+): Asp-516, Asp-522, Glu-525, and Glu-526. The insert stretch occupies residues 621-675 (PDSTHNPDSGSDPIIPTGVTRITEPGSSGVSGPGNVGVKEKCSADTSIEHAPTTR). The FDX-ACB domain maps to 870-961 (PTSPAATQHL…ASSKFGAIMR (92 aa)).

Belongs to the phenylalanyl-tRNA synthetase beta subunit family. Type 1 subfamily. In terms of assembly, tetramer of two alpha and two beta subunits. Requires Mg(2+) as cofactor.

Its subcellular location is the cytoplasm. It carries out the reaction tRNA(Phe) + L-phenylalanine + ATP = L-phenylalanyl-tRNA(Phe) + AMP + diphosphate + H(+). This Tropheryma whipplei (strain Twist) (Whipple's bacillus) protein is Phenylalanine--tRNA ligase beta subunit.